The sequence spans 1372 residues: DNA-directed RNA polymerase subunit beta (1372 aa).

It belongs to the RNA polymerase beta chain family. As to quaternary structure, the RNAP catalytic core consists of 2 alpha, 1 beta, 1 beta' and 1 omega subunit. When a sigma factor is associated with the core the holoenzyme is formed, which can initiate transcription.

It carries out the reaction RNA(n) + a ribonucleoside 5'-triphosphate = RNA(n+1) + diphosphate. DNA-dependent RNA polymerase catalyzes the transcription of DNA into RNA using the four ribonucleoside triphosphates as substrates. The sequence is that of DNA-directed RNA polymerase subunit beta from Nitratidesulfovibrio vulgaris (strain ATCC 29579 / DSM 644 / CCUG 34227 / NCIMB 8303 / VKM B-1760 / Hildenborough) (Desulfovibrio vulgaris).